The following is a 238-amino-acid chain: Probable transcriptional regulatory protein CTA_0499 (238 aa).

Residues M1–K21 are disordered. The span at N9–K21 shows a compositional bias: basic residues.

Belongs to the TACO1 family.

The protein localises to the cytoplasm. The chain is Probable transcriptional regulatory protein CTA_0499 from Chlamydia trachomatis serovar A (strain ATCC VR-571B / DSM 19440 / HAR-13).